The sequence spans 281 residues: MYIFFPKLNPIIFTIGPVSARWYGFMYVISFLFAMWYGKKCSIKNKKIWYEKKIETLLYSIFLGSCIGGRIGYIIFYNFSYYSQNMLSVFYIWEGGMSFHGGLIGAIIVMSYFSFKYKKKILEISDFITPLIPFGLGAGRIGNFINSELWGRVSPNFSYAMIFPNSQNQDLKEIKKYPELQLLLDQYGALPRHPTQLYEFFLEGILLFFIIYFFSKKDRPTGSISGLFLIFYGLFRIFIEFFREPDPQIGLLKNIITMGQILSLPMIIAGLIIMYKSYYKK.

3 consecutive transmembrane segments (helical) span residues 11–31 (IIFT…VISF), 57–77 (LLYS…IIFY), and 89–109 (VFYI…AIIV). Arg140 provides a ligand contact to a 1,2-diacyl-sn-glycero-3-phospho-(1'-sn-glycerol). Helical transmembrane passes span 194–214 (PTQL…IYFF), 222–242 (GSIS…IEFF), and 255–275 (IITM…IIMY).

It belongs to the Lgt family.

The protein resides in the cell inner membrane. The catalysed reaction is L-cysteinyl-[prolipoprotein] + a 1,2-diacyl-sn-glycero-3-phospho-(1'-sn-glycerol) = an S-1,2-diacyl-sn-glyceryl-L-cysteinyl-[prolipoprotein] + sn-glycerol 1-phosphate + H(+). It functions in the pathway protein modification; lipoprotein biosynthesis (diacylglyceryl transfer). Its function is as follows. Catalyzes the transfer of the diacylglyceryl group from phosphatidylglycerol to the sulfhydryl group of the N-terminal cysteine of a prolipoprotein, the first step in the formation of mature lipoproteins. The polypeptide is Phosphatidylglycerol--prolipoprotein diacylglyceryl transferase (Buchnera aphidicola subsp. Acyrthosiphon pisum (strain APS) (Acyrthosiphon pisum symbiotic bacterium)).